The sequence spans 227 residues: Pectinesterase inhibitor 28 (227 aa).

Positions Met-1–Cys-25 are cleaved as a signal peptide. The disordered stretch occupies residues Ser-28 to Pro-50. A compositionally biased stretch (basic residues) spans Lys-34–Arg-43. Cysteines 66 and 75 form a disulfide. Asn-67, Asn-104, and Asn-117 each carry an N-linked (GlcNAc...) asparagine glycan. A disulfide bridge links Cys-139 with Cys-179.

This sequence belongs to the PMEI family. As to expression, expressed in roots, leaves, culms and flag leaves.

The protein localises to the secreted. Its subcellular location is the extracellular space. The protein resides in the apoplast. Pectin methylesterase (PME) inhibitor that inhibits PME in vitro. Functions as a critical structural modulator by regulating the degree of pectin methylesterification and the physiochemical properties of the cell wall components. The sequence is that of Pectinesterase inhibitor 28 from Oryza sativa subsp. japonica (Rice).